The sequence spans 689 residues: Putative pentatricopeptide repeat-containing protein At3g15130 (689 aa).

PPR repeat units follow at residues 5–39, 40–70, 71–105, 106–140, 141–171, 172–206, 209–243, 246–276, 277–311, 312–342, 347–377, 378–412, 413–448, and 449–479; these read QRQNLVSILRVCTRKGLSDQGGQVHCYLLKSGSGL, NLITSNYLIDMYCKCREPLMAYKVFDSMPER, NVVSWSALMSGHVLNGDLKGSLSLFSEMGRQGIYP, NEFTFSTNLKACGLLNALEKGLQIHGFCLKIGFEM, MVEVGNSLVDMYSKCGRINEAEKVFRRIVDR, SLISWNAMIAGFVHAGYGSKALDTFGMMQEANIKE, DEFTLTSLLKACSSTGMIYAGKQIHGFLVRSGFHC, SATITGSLVDLYVKCGYLFSARKAFDQIKEK, TMISWSSLILGYAQEGEFVEAMGLFKRLQELNSQI, DSFALSSIIGVFADFALLRQGKQMQALAVKL, ETSVLNSVVDMYLKCGLVDEAEKCFAEMQLK, DVISWTVVITGYGKHGLGKKSVRIFYEMLRHNIEP, DEVCYLAVLSACSHSGMIKEGEELFSKLLETHGIKP, and RVEHYACVVDLLGRAGRLKEAKHLIDTMPIK. The tract at residues 484-559 is type E motif; it reads IWQTLLSLCR…EAGMSWVEIE (76 aa). The tract at residues 560–590 is type E(+) motif; it reads REVHFFRSGEDSHPLTPVIQETLKEAERRLR. The tract at residues 592–689 is type DYW motif; that stretch reads ELGYVYGLKH…DGCCSCGDYW (98 aa).

It belongs to the PPR family. PCMP-H subfamily.

The protein is Putative pentatricopeptide repeat-containing protein At3g15130 (PCMP-H86) of Arabidopsis thaliana (Mouse-ear cress).